The chain runs to 266 residues: MVKVTFNSALAQKEAKKXEPKSGEEALIIPPDTXAVDCKDPDEVVPVGQRRAWCWCMCFGLAFMLAGVILGGAYLYKYFALQPDDVYYCGIKYIKDDVILNEPPANAPAARYQTIEENIKIFEEDGVEFISVPVPEFADSDPANIVHDFNKKLTAYLDLNLDKCYVIPLNTSIVMPPRNLLELLINIKAGTYLPQSYLIHEHMVITDRIENIDHLGFYIYRLCHDKETYKLQRKETVKGIQKREASNCATIRHFENKFAVETLICS.

Residues 1-54 (MVKVTFNSALAQKEAKKXEPKSGEEALIIPPDTXAVDCKDPDEVVPVGQRRAWC) lie on the Cytoplasmic side of the membrane. Residues 55–75 (WCMCFGLAFMLAGVILGGAYL) traverse the membrane as a helical; Signal-anchor for type II membrane protein segment. The Lumenal portion of the chain corresponds to 76–266 (YKYFALQPDD…KFAVETLICS (191 aa)). Residues 102–134 (EPPANAPAARYQTIEENIKIFEEDGVEFISVPV) form a necessary for interaction with APP and inhibitor effects on APP processing region. The BRICHOS domain maps to 137-231 (FADSDPANIV…LCHDKETYKL (95 aa)). Cystine bridges form between C164–C223 and C248–C265. N170 carries N-linked (GlcNAc...) asparagine glycosylation.

Belongs to the ITM2 family. In terms of assembly, homodimer; disulfide-linked. Interacts with SPPL2A and SPPL2B. Interacts with APP. Mature BRI2 (mBRI2) interacts with the APP amyloid-beta A4 protein; the interaction occurs at the cell surface and in the endocytic compartments and enable alpha- and beta-secretase-induced APP cleavage inhibition. Mature BRI2 (mBRI2) interacts with the APP C99; the interaction occurs in the endocytic compartments and enable gamma-secretase-induced C99 cleavage inhibition. May form heterodimers with Bri23 peptide and APP amyloid-beta protein 40. Interacts with ADAM7 in sperm; the interaction increases following capacitation. In terms of processing, the ectodomain C-terminal part of the imBRI2 is processed by furin producing a secreted Bri23 peptide and a mature BRI2, membrane form (mBRI2). The remaining part of the ectodomain of mBRI2 containing the BRICHOS domain is cleaved by ADAM10 and is secreted (BRI2C, soluble form). The membrane-bound N-terminal fragment (BRI2C, membrane form) is further proteolytically processed by SPPL2A and SPPL2B through regulated intramembrane proteolysis producing a secreted C-peptide and a BRI2 intracellular domain (BRI2 ICD) released in the cytosol. Shedding by ADAM10 facilitates intramembrane cleavage but is not absolutely required for BRI2 ICD generation. Glycosylation at Asn-170 is important for cell surface localization, but doesn't affect furin- and ADAM10-induced proteolytic processing.

It localises to the golgi apparatus membrane. Its subcellular location is the cell membrane. It is found in the endosome membrane. The protein localises to the secreted. Its function is as follows. Plays a regulatory role in the processing of the amyloid-beta A4 precursor protein (APP) and acts as an inhibitor of the amyloid-beta peptide aggregation and fibrils deposition. Plays a role in the induction of neurite outgrowth. Functions as a protease inhibitor by blocking access of secretases to APP cleavage sites. In terms of biological role, mature BRI2 (mBRI2) functions as a modulator of the amyloid-beta A4 precursor protein (APP) processing leading to a strong reduction in the secretion of secretase-processed amyloid-beta protein 40 and amyloid-beta protein 42. Bri23 peptide prevents aggregation of APP amyloid-beta protein 42 into toxic oligomers. This is Integral membrane protein 2B (ITM2B) from Sus scrofa (Pig).